A 232-amino-acid polypeptide reads, in one-letter code: Large ribosomal subunit protein uL1 (232 aa).

Belongs to the universal ribosomal protein uL1 family. As to quaternary structure, part of the 50S ribosomal subunit.

Its function is as follows. Binds directly to 23S rRNA. The L1 stalk is quite mobile in the ribosome, and is involved in E site tRNA release. In terms of biological role, protein L1 is also a translational repressor protein, it controls the translation of the L11 operon by binding to its mRNA. The polypeptide is Large ribosomal subunit protein uL1 (Azobacteroides pseudotrichonymphae genomovar. CFP2).